The sequence spans 180 residues: Large ribosomal subunit protein uL5 (180 aa).

The protein belongs to the universal ribosomal protein uL5 family. In terms of assembly, part of the 50S ribosomal subunit; part of the 5S rRNA/L5/L18/L25 subcomplex. Contacts the 5S rRNA and the P site tRNA. Forms a bridge to the 30S subunit in the 70S ribosome.

In terms of biological role, this is one of the proteins that bind and probably mediate the attachment of the 5S RNA into the large ribosomal subunit, where it forms part of the central protuberance. In the 70S ribosome it contacts protein S13 of the 30S subunit (bridge B1b), connecting the 2 subunits; this bridge is implicated in subunit movement. Contacts the P site tRNA; the 5S rRNA and some of its associated proteins might help stabilize positioning of ribosome-bound tRNAs. The chain is Large ribosomal subunit protein uL5 from Lacticaseibacillus casei (strain BL23) (Lactobacillus casei).